Consider the following 492-residue polypeptide: Catalase-4 (492 aa).

Residues H65 and N138 contribute to the active site. Residue Y348 coordinates heme.

The protein belongs to the catalase family. As to quaternary structure, homotetramer. It depends on heme as a cofactor.

It is found in the peroxisome. Its subcellular location is the glyoxysome. It carries out the reaction 2 H2O2 = O2 + 2 H2O. Occurs in almost all aerobically respiring organisms and serves to protect cells from the toxic effects of hydrogen peroxide. The sequence is that of Catalase-4 (CAT4) from Glycine max (Soybean).